Here is a 937-residue protein sequence, read N- to C-terminus: Protocadherin alpha-7 (937 aa).

The signal sequence occupies residues 1-29 (MVCPNGYDPGGRHLLLFIIILAAWEAGRG). 6 Cadherin domains span residues 30–133 (QLHY…PPVF), 134–242 (PATQ…APVF), 243–350 (DRTL…APQL), 351–455 (TLTS…APAF), 456–565 (AQPE…APAL), and 581–678 (VPRS…APKA). At 30 to 697 (QLHYSVPEEA…GPETELVDVN (668 aa)) the chain is on the extracellular side. A disulfide bridge links C96 with C102. N-linked (GlcNAc...) asparagine glycosylation is found at N254 and N265. N-linked (GlcNAc...) asparagine glycosylation occurs at N548. A helical transmembrane segment spans residues 698 to 718 (VYLIIAICAVSSLLVLTLLLY). Over 719–937 (TALRCSAPSS…GNSTTDNSDQ (219 aa)) the chain is Cytoplasmic. Disordered regions lie at residues 755-795 (RQRV…DWRY) and 814-937 (ILRA…NSDQ). 5 PXXP repeats span residues 774-777 (PSLP), 786-789 (PRQP), 819-822 (PGGP), 860-863 (PGNP), and 878-881 (PGSP). The tract at residues 774–881 (PSLPQGPSST…PDKFIIPGSP (108 aa)) is 5 X 4 AA repeats of P-X-X-P. The span at 775-787 (SLPQGPSSTDNPR) shows a compositional bias: polar residues. Residues 896–910 (DKSDFITFGKKEETK) show a composition bias toward basic and acidic residues.

As to quaternary structure, forms homodimers in trans (molecules expressed by two different cells). Forms promiscuous heterodimers in cis (at the plasma membrane of the same cell) with other protocadherins.

The protein resides in the cell membrane. Calcium-dependent cell-adhesion protein involved in cells self-recognition and non-self discrimination. Thereby, it is involved in the establishment and maintenance of specific neuronal connections in the brain. In Homo sapiens (Human), this protein is Protocadherin alpha-7.